Reading from the N-terminus, the 67-residue chain is Large ribosomal subunit protein bL35 (67 aa).

Residues 1-16 (MPKMKTKSGAKKRFRV) are compositionally biased toward basic residues. Residues 1-24 (MPKMKTKSGAKKRFRVRPGGTVKR) form a disordered region.

This sequence belongs to the bacterial ribosomal protein bL35 family.

This is Large ribosomal subunit protein bL35 from Polaromonas naphthalenivorans (strain CJ2).